Here is a 403-residue protein sequence, read N- to C-terminus: L-alanine/L-glutamate racemase (403 aa).

Pyridoxal 5'-phosphate is bound by residues 62 to 64 (YSN), 92 to 93 (GL), and 209 to 211 (AVT). The residue at position 212 (lysine 212) is an N6-(pyridoxal phosphate)lysine.

This sequence belongs to the trans-sulfuration enzymes family. As to quaternary structure, homotetramer; dimer of active dimers. Pyridoxal 5'-phosphate is required as a cofactor.

It catalyses the reaction L-alanine = D-alanine. The enzyme catalyses L-glutamate = D-glutamate. The catalysed reaction is L,L-cystathionine + H2O = L-homocysteine + pyruvate + NH4(+). The protein operates within cell wall biogenesis; peptidoglycan biosynthesis. Catalyzes the racemization of L-alanine to D-alanine, and of L-glutamate to D-glutamate. The activity is low, but likely physiological since W.pipientis wMel lacks canonical alr and murI genes, while D-alanine and D-glutamate are essential components of peptidoglycan. Also displays a vestigial cystathionine beta-lyase (CBL) activity, cleaving cystathionine to homocysteine and pyruvate; however, this reaction seems not to be physiologically relevant since the only met gene in the genome of this obligately intracellular parasitic bacterium is metC, demonstrating that it is a methionine auxotroph. The polypeptide is L-alanine/L-glutamate racemase (Wolbachia pipientis wMel).